The chain runs to 524 residues: Glucose-6-phosphate isomerase (524 aa).

Residue E346 is the Proton donor of the active site. Catalysis depends on residues H377 and K492.

The protein belongs to the GPI family.

The protein resides in the cytoplasm. The enzyme catalyses alpha-D-glucose 6-phosphate = beta-D-fructose 6-phosphate. It participates in carbohydrate biosynthesis; gluconeogenesis. Its pathway is carbohydrate degradation; glycolysis; D-glyceraldehyde 3-phosphate and glycerone phosphate from D-glucose: step 2/4. In terms of biological role, catalyzes the reversible isomerization of glucose-6-phosphate to fructose-6-phosphate. This Chlamydia trachomatis serovar A (strain ATCC VR-571B / DSM 19440 / HAR-13) protein is Glucose-6-phosphate isomerase.